The following is a 664-amino-acid chain: Putative peroxisomal acyl-coenzyme A oxidase 1.2 (664 aa).

399-404 (CGGHGY) provides a ligand contact to FAD. Residues 662–664 (AKL) carry the Microbody targeting signal motif.

This sequence belongs to the acyl-CoA oxidase family. It depends on FAD as a cofactor.

The protein localises to the peroxisome. It carries out the reaction a 2,3-saturated acyl-CoA + O2 = a (2E)-enoyl-CoA + H2O2. Catalyzes the desaturation of acyl-CoAs to 2-trans-enoyl-CoAs. The chain is Putative peroxisomal acyl-coenzyme A oxidase 1.2 (ACX1.2) from Arabidopsis thaliana (Mouse-ear cress).